A 270-amino-acid chain; its full sequence is Flavin-dependent thymidylate synthase (270 aa).

In terms of domain architecture, ThyX spans Gly13–His218. FAD contacts are provided by residues Ser59, Arg82–Arg84, and Glu90. DUMP-binding positions include Gln79–Arg82, Glu90–Arg94, and Arg157. Residues Arg82–Ser92 carry the ThyX motif motif. FAD-binding positions include Asp173 to His175 and His179. Arg184 is a dUMP binding site. The active-site Involved in ionization of N3 of dUMP, leading to its activation is the Arg184.

It belongs to the thymidylate synthase ThyX family. In terms of assembly, homotetramer. It depends on FAD as a cofactor.

The enzyme catalyses dUMP + (6R)-5,10-methylene-5,6,7,8-tetrahydrofolate + NADPH + H(+) = dTMP + (6S)-5,6,7,8-tetrahydrofolate + NADP(+). Its pathway is pyrimidine metabolism; dTTP biosynthesis. Catalyzes the reductive methylation of 2'-deoxyuridine-5'-monophosphate (dUMP) to 2'-deoxythymidine-5'-monophosphate (dTMP) while utilizing 5,10-methylenetetrahydrofolate (mTHF) as the methyl donor, and NADPH and FADH(2) as the reductant. The protein is Flavin-dependent thymidylate synthase of Thermus thermophilus (strain ATCC BAA-163 / DSM 7039 / HB27).